The sequence spans 97 residues: Ataxin-7-like protein 3B (97 aa).

Residues 76-97 (SLPGDPGDGPQTELQRSPPEFQ) form a disordered region. Ser-92 carries the post-translational modification Phosphoserine.

It belongs to the SGF11 family. As to quaternary structure, interacts strongly with ENY2. Interacts weakly with USP22.

It is found in the cytoplasm. By binding to ENY2, interferes with the nuclear functions of the deubiquitinase (DUB) module of the SAGA complex which consists of ENY2, ATXN7, ATXN7L3 and the histone deubiquitinating component USP22. Affects USP22 DUB activity toward histones indirectly by changing the subcellular distribution of ENY2 and altering ENY2 availability for ATXN7L3 interaction. Regulates H2B monoubiquitination (H2Bub1) levels through cytoplasmic sequestration of ENY2 resulting in loss of nuclear ENY2-ATXN7L3 association which destabilizes ATXN7L3. Affects protein expression levels of ENY2 and ATXN7L3. In Mus musculus (Mouse), this protein is Ataxin-7-like protein 3B (Atxn7l3b).